The chain runs to 482 residues: Aspartyl/glutamyl-tRNA(Asn/Gln) amidotransferase subunit B (482 aa).

This sequence belongs to the GatB/GatE family. GatB subfamily. As to quaternary structure, heterotrimer of A, B and C subunits.

It catalyses the reaction L-glutamyl-tRNA(Gln) + L-glutamine + ATP + H2O = L-glutaminyl-tRNA(Gln) + L-glutamate + ADP + phosphate + H(+). The catalysed reaction is L-aspartyl-tRNA(Asn) + L-glutamine + ATP + H2O = L-asparaginyl-tRNA(Asn) + L-glutamate + ADP + phosphate + 2 H(+). In terms of biological role, allows the formation of correctly charged Asn-tRNA(Asn) or Gln-tRNA(Gln) through the transamidation of misacylated Asp-tRNA(Asn) or Glu-tRNA(Gln) in organisms which lack either or both of asparaginyl-tRNA or glutaminyl-tRNA synthetases. The reaction takes place in the presence of glutamine and ATP through an activated phospho-Asp-tRNA(Asn) or phospho-Glu-tRNA(Gln). The protein is Aspartyl/glutamyl-tRNA(Asn/Gln) amidotransferase subunit B of Methanoregula boonei (strain DSM 21154 / JCM 14090 / 6A8).